Reading from the N-terminus, the 321-residue chain is uncharacterized protein (321 aa).

It belongs to the NAD(P)-dependent epimerase/dehydratase family.

This is an uncharacterized protein from Staphylococcus aureus (strain MRSA252).